The chain runs to 337 residues: DNA-directed RNA polymerase subunit alpha (337 aa).

Residues 1–231 (MRNITTSAYT…KQLSVFDKIT (231 aa)) are alpha N-terminal domain (alpha-NTD). The alpha C-terminal domain (alpha-CTD) stretch occupies residues 247–337 (ENTKLLQNIT…IAELKAQNEG (91 aa)).

It belongs to the RNA polymerase alpha chain family. In terms of assembly, homodimer. The RNAP catalytic core consists of 2 alpha, 1 beta, 1 beta' and 1 omega subunit. When a sigma factor is associated with the core the holoenzyme is formed, which can initiate transcription.

It catalyses the reaction RNA(n) + a ribonucleoside 5'-triphosphate = RNA(n+1) + diphosphate. Its function is as follows. DNA-dependent RNA polymerase catalyzes the transcription of DNA into RNA using the four ribonucleoside triphosphates as substrates. This is DNA-directed RNA polymerase subunit alpha from Campylobacter jejuni subsp. jejuni serotype O:2 (strain ATCC 700819 / NCTC 11168).